The chain runs to 200 residues: 3-isopropylmalate dehydratase small subunit (200 aa).

Belongs to the LeuD family. LeuD type 1 subfamily. Heterodimer of LeuC and LeuD.

The catalysed reaction is (2R,3S)-3-isopropylmalate = (2S)-2-isopropylmalate. It functions in the pathway amino-acid biosynthesis; L-leucine biosynthesis; L-leucine from 3-methyl-2-oxobutanoate: step 2/4. Functionally, catalyzes the isomerization between 2-isopropylmalate and 3-isopropylmalate, via the formation of 2-isopropylmaleate. The polypeptide is 3-isopropylmalate dehydratase small subunit (leuD) (Synechocystis sp. (strain ATCC 27184 / PCC 6803 / Kazusa)).